Here is an 872-residue protein sequence, read N- to C-terminus: Bifunctional heparan sulfate N-deacetylase/N-sulfotransferase 4 (872 aa).

At Met-1–Thr-13 the chain is on the cytoplasmic side. A helical; Signal-anchor for type II membrane protein membrane pass occupies residues Leu-14–Tyr-34. The Lumenal portion of the chain corresponds to Ser-35–Arg-872. The tract at residues Gly-36 to Glu-588 is heparan sulfate N-deacetylase 4. Residues Asn-226, Asn-341, and Asn-391 are each glycosylated (N-linked (GlcNAc...) asparagine). The heparan sulfate N-sulfotransferase 4 stretch occupies residues Lys-589–Arg-872. Lys-604 (for sulfotransferase activity) is an active-site residue. Lys-604–Thr-608 lines the 3'-phosphoadenylyl sulfate pocket. Asn-657 carries N-linked (GlcNAc...) asparagine glycosylation. Ser-702 contributes to the 3'-phosphoadenylyl sulfate binding site. N-linked (GlcNAc...) asparagine glycosylation occurs at Asn-793. A disulfide bridge links Cys-808 with Cys-818. Lys-823–Tyr-827 lines the 3'-phosphoadenylyl sulfate pocket.

It belongs to the sulfotransferase 1 family. NDST subfamily. As to quaternary structure, monomer. In terms of tissue distribution, expressed at low level in brain and throughout embryogenesis. Not expressed in other tissues.

It localises to the golgi apparatus membrane. It carries out the reaction alpha-D-glucosaminyl-[heparan sulfate](n) + 3'-phosphoadenylyl sulfate = N-sulfo-alpha-D-glucosaminyl-[heparan sulfate](n) + adenosine 3',5'-bisphosphate + 2 H(+). Its pathway is glycan metabolism; heparan sulfate biosynthesis. The protein operates within glycan metabolism; heparin biosynthesis. Functionally, essential bifunctional enzyme that catalyzes both the N-deacetylation and the N-sulfation of glucosamine (GlcNAc) of the glycosaminoglycan in heparan sulfate. Modifies the GlcNAc-GlcA disaccharide repeating sugar backbone to make N-sulfated heparosan, a prerequisite substrate for later modifications in heparin biosynthesis. Has low deacetylase activity but high sulfotransferase activity. This chain is Bifunctional heparan sulfate N-deacetylase/N-sulfotransferase 4 (Ndst4), found in Mus musculus (Mouse).